The chain runs to 619 residues: Kininogen-2 (619 aa).

An N-terminal signal peptide occupies residues 1–18 (MKLITILFLCSRLLPSLT). Gln-19 carries the pyrrolidone carboxylic acid modification. One can recognise a Cystatin kininogen-type 1 domain in the interval 27 to 131 (CNDQDVFKAV…IQTCLITPAE (105 aa)). 9 disulfide bridges follow: Cys-27/Cys-589, Cys-82/Cys-93, Cys-106/Cys-125, Cys-141/Cys-144, Cys-205/Cys-217, Cys-228/Cys-247, Cys-261/Cys-264, Cys-325/Cys-337, and Cys-348/Cys-367. An N-linked (GlcNAc...) asparagine glycan is attached at Asn-87. Thr-136 carries O-linked (GalNAc...) threonine; partial glycosylation. The 104-residue stretch at 150-253 (TKSPDLEPVL…SQKCDLYPGE (104 aa)) folds into the Cystatin kininogen-type 2 domain. N-linked (GlcNAc...) asparagine glycans are attached at residues Asn-168 and Asn-169. Asn-197 is a glycosylation site (N-linked (GlcNAc...) asparagine; partial). N-linked (GlcNAc...) asparagine glycosylation is present at Asn-204. A Cystatin kininogen-type 3 domain is found at 270–373 (VDSPDLEEAL…TVNCQPLGQT (104 aa)). Asn-280 carries N-linked (GlcNAc...) asparagine glycosylation. 4-hydroxyproline is present on Pro-380. A disordered region spans residues 394-495 (EGSTTVSLPH…GKNNGKHYDW (102 aa)). An O-linked (GalNAc...) serine glycan is attached at Ser-396. Thr-397 and Thr-398 each carry an O-linked (GalNAc...) threonine glycan. Ser-400 and Ser-404 each carry an O-linked (GalNAc...) serine glycan. The span at 442–490 (GHKHKHDQGHGHHRSHGLGHGHQKQHGLGHGHKHGHGHGKHKNKGKNNG) shows a compositional bias: basic residues. A glycan (O-linked (GalNAc...) serine) is linked at Ser-510. O-linked (GalNAc...) threonine glycosylation is found at Thr-518, Thr-522, Thr-534, Thr-546, Thr-551, and Thr-568.

Post-translationally, bradykinin is released from kininogen by plasma kallikrein. As to expression, plasma.

It localises to the secreted. Its subcellular location is the extracellular space. Its function is as follows. (1) Kininogens are inhibitors of thiol proteases; (2) HMW-kininogen plays an important role in blood coagulation by helping to position optimally prekallikrein and factor XI next to factor XII; (3) HMW-kininogen inhibits the thrombin- and plasmin-induced aggregation of thrombocytes; (4) the active peptide bradykinin that is released from HMW-kininogen shows a variety of physiological effects: (4A) influence in smooth muscle contraction, (4B) induction of hypotension, (4C) natriuresis and diuresis, (4D) decrease in blood glucose level, (4E) it is a mediator of inflammation and causes (4E1) increase in vascular permeability, (4E2) stimulation of nociceptors (4E3) release of other mediators of inflammation (e.g. prostaglandins), (4F) it has a cardioprotective effect (directly via bradykinin action, indirectly via endothelium-derived relaxing factor action); (5) LMW-kininogen inhibits the aggregation of thrombocytes; (6) LMW-kininogen is in contrast to HMW-kininogen not involved in blood clotting. In Bos taurus (Bovine), this protein is Kininogen-2 (KNG2).